The sequence spans 144 residues: Cytochrome c oxidase subunit 4 isoform 1, mitochondrial (144 aa).

At 1-73 (SVVKSEDFSL…SFAEMNRGSN (73 aa)) the chain is on the mitochondrial matrix side. The residue at position 4 (Lys4) is an N6-acetyllysine; alternate. Lys4 is modified (N6-succinyllysine; alternate). Residue Lys28 is modified to N6-acetyllysine. Ser31 and Ser33 each carry phosphoserine. N6-acetyllysine; alternate is present on Lys35. Position 35 is an N6-succinyllysine; alternate (Lys35). N6-acetyllysine is present on Lys42. A helical transmembrane segment spans residues 74 to 99 (EWKTVVGGAMFFIGFTALVIMWQKHY). At 100–144 (VYGPLPQSFDKEWVAKQTKRMLDMKVNPIQGLASKWDYEKNEWKK) the chain is on the mitochondrial intermembrane side.

This sequence belongs to the cytochrome c oxidase IV family. In terms of assembly, component of the cytochrome c oxidase (complex IV, CIV), a multisubunit enzyme composed of 14 subunits. The complex is composed of a catalytic core of 3 subunits MT-CO1, MT-CO2 and MT-CO3, encoded in the mitochondrial DNA, and 11 supernumerary subunits COX4I, COX5A, COX5B, COX6A, COX6B, COX6C, COX7A, COX7B, COX7C, COX8 and NDUFA4, which are encoded in the nuclear genome. The complex exists as a monomer or a dimer and forms supercomplexes (SCs) in the inner mitochondrial membrane with NADH-ubiquinone oxidoreductase (complex I, CI) and ubiquinol-cytochrome c oxidoreductase (cytochrome b-c1 complex, complex III, CIII), resulting in different assemblies (supercomplex SCI(1)III(2)IV(1) and megacomplex MCI(2)III(2)IV(2)). Interacts with PHB2; the interaction decreases in absence of SPHK2. Interacts with AFG1L. Interacts with ABCB7; this interaction allows the regulation of cellular iron homeostasis and cellular reactive oxygen species (ROS) levels in cardiomyocytes. Interacts with FLVCR2; this interaction occurs in the absence of heme and is disrupted upon heme binding. Interacts with IRGC.

The protein localises to the mitochondrion inner membrane. It functions in the pathway energy metabolism; oxidative phosphorylation. Component of the cytochrome c oxidase, the last enzyme in the mitochondrial electron transport chain which drives oxidative phosphorylation. The respiratory chain contains 3 multisubunit complexes succinate dehydrogenase (complex II, CII), ubiquinol-cytochrome c oxidoreductase (cytochrome b-c1 complex, complex III, CIII) and cytochrome c oxidase (complex IV, CIV), that cooperate to transfer electrons derived from NADH and succinate to molecular oxygen, creating an electrochemical gradient over the inner membrane that drives transmembrane transport and the ATP synthase. Cytochrome c oxidase is the component of the respiratory chain that catalyzes the reduction of oxygen to water. Electrons originating from reduced cytochrome c in the intermembrane space (IMS) are transferred via the dinuclear copper A center (CU(A)) of subunit 2 and heme A of subunit 1 to the active site in subunit 1, a binuclear center (BNC) formed by heme A3 and copper B (CU(B)). The BNC reduces molecular oxygen to 2 water molecules using 4 electrons from cytochrome c in the IMS and 4 protons from the mitochondrial matrix. The polypeptide is Cytochrome c oxidase subunit 4 isoform 1, mitochondrial (COX4I1) (Gorilla gorilla gorilla (Western lowland gorilla)).